A 1001-amino-acid chain; its full sequence is MSHLTGTRVSTFNESFLNENEHDSNAVLMELDKGLRSTKQGIQCEAVVRFPRLFEKYPFPILINSSFIKLADYFVSGSNLLRFWVLRVCQQSENHLDKILNIDSFVRCIFVVMHSNDPVARALLLRTLGAVSRVIPEKQQVHHAIRRALDSHDTVEVEAAIYASSCFAAQSSSFAISMCAKISDMIESLQVPVPMKLLLIPVLRHMHHEATTASLVSRLCMDLLPKYPAQSFVVAIIDTLTQLSSRTLVGVPGQLDVLLDFMQDLRTPVRIQVLRSFNELAGRQSVHAWPKPAIKALIDRFELCTNSKEQFLFLSILLKLSECPLTCQQLLREHRVALLRLCIQCISKLDDYTTATQAMAVLSVLVAFGLKKKGSGEQVDDILHMVNLHMEGLLLCTAKRSECTRDLRRVLTYGIRITKANAEFGTSFIGIVTNSLGDKGAYPPANAELMCEALAGLCEHFQLRKYAFSTAEDLIVDENAMDTDELPPPKINPMLARLPLILHKLNTIIDQENCDQQLRSVEILSSLVLQTTMGCYLPQKVVQCFEKCLGRLNCWTLYRIARTASRYGHHYVAAHIYTKVSQIVISDHMHYFLVALSQISQAECILNYGLEYAYMRDNYAPKVAPEPLIPLMKRLEMASNLYQQALASLRAGSSPQHPCTFQLEYLKIRAQFLQTLHLAVTVKNAQVIVPPPAIAGSLAQNSRDYLQKFGHVTNQLRKLVKALKACEETYARLYKSSFDADHVTLEFLEVAEFQCALFAHIIESICYATPPEPPVFLTTGDHPETRYFAASCQRMEQMQKNLPQEPANAKTISNRHLDVIIAQIEIITKTPLCLPRYFFQILQSTQIKLSVSPQPRSATEPVNVQSGSNLVIKVEGVLQHFSKQKKHFRRVESVQLSLTSQLITPPPRSSQELPKQGANDTVTLNQIVKPQRDFLSGSFLLPISNGGHFQVTLETFVVDENGITWCTGPKSSMVVRVLEDPSKQGAPAPSTSQAVGQTRRF.

Residues 980–1001 (DPSKQGAPAPSTSQAVGQTRRF) form a disordered region. Polar residues predominate over residues 989-1001 (PSTSQAVGQTRRF).

It belongs to the Integrator subunit 7 family. Belongs to the multiprotein complex Integrator, at least composed of IntS1, IntS2, IntS3, IntS4, omd/IntS5, IntS6, defl/IntS7, IntS8, IntS9, IntS10, IntS11, IntS12, asun/IntS13, IntS14 and IntS15. The core complex associates with protein phosphatase 2A subunits mts/PP2A and Pp2A-29B, to form the Integrator-PP2A (INTAC) complex.

Its subcellular location is the nucleus. It localises to the cytoplasm. In terms of biological role, component of the integrator complex, a multiprotein complex that terminates RNA polymerase II (Pol II) transcription in the promoter-proximal region of genes. The integrator complex provides a quality checkpoint during transcription elongation by driving premature transcription termination of transcripts that are unfavorably configured for transcriptional elongation: the complex terminates transcription by (1) catalyzing dephosphorylation of the C-terminal domain (CTD) of Pol II subunit Polr2A/Rbp1 and Spt5, and (2) degrading the exiting nascent RNA transcript via endonuclease activity. The integrator complex is also involved in the 3'-end processing of the U7 snRNA, and also the spliceosomal snRNAs U1, U2, U4 and U5. The chain is Integrator complex subunit 7 from Drosophila melanogaster (Fruit fly).